Consider the following 593-residue polypeptide: DNA primase (593 aa).

The segment at 38–62 (CPFHQEKTPSFTVSDSKRFFYCFGC) adopts a CHC2-type zinc-finger fold. The Toprim domain maps to 250–332 (NRSILVEGYF…EKKISFIRLP (83 aa)). Positions 256, 300, and 302 each coordinate Mg(2+).

The protein belongs to the DnaG primase family. As to quaternary structure, monomer. Interacts with DnaB. It depends on Zn(2+) as a cofactor. Mg(2+) is required as a cofactor.

It carries out the reaction ssDNA + n NTP = ssDNA/pppN(pN)n-1 hybrid + (n-1) diphosphate.. Its function is as follows. RNA polymerase that catalyzes the synthesis of short RNA molecules used as primers for DNA polymerase during DNA replication. This is DNA primase from Rickettsia typhi (strain ATCC VR-144 / Wilmington).